We begin with the raw amino-acid sequence, 307 residues long: Porphobilinogen deaminase (307 aa).

Cysteine 241 bears the S-(dipyrrolylmethanemethyl)cysteine mark.

Belongs to the HMBS family. As to quaternary structure, monomer. Dipyrromethane is required as a cofactor.

It catalyses the reaction 4 porphobilinogen + H2O = hydroxymethylbilane + 4 NH4(+). Its pathway is porphyrin-containing compound metabolism; protoporphyrin-IX biosynthesis; coproporphyrinogen-III from 5-aminolevulinate: step 2/4. Tetrapolymerization of the monopyrrole PBG into the hydroxymethylbilane pre-uroporphyrinogen in several discrete steps. The polypeptide is Porphobilinogen deaminase (Macrococcus caseolyticus (strain JCSC5402) (Macrococcoides caseolyticum)).